The chain runs to 2159 residues: MALGTQLMLLLWKNYTYRRRQPIQLLVELLWPLFLFFILVAVRHSHPPLEHHECHFPNKPLPSAGTVPWLQGLVCNVNNSCFQHPTPGEKPGVLSNFKDSLISRLLADTRTVLGGHSIQDMLDALGKLIPVLRAVGGGARPQESDQPTSQGSVTKLLEKILQRASLDPVLGQAQDSMRKFSDAIRDLAQELLTLPSLMELRALLRRPRGSAGSLELVSEALCSTKGPSSPGGLSLNWYEANQLNEFMGPEVAPALPDNSLSPACSEFVGTLDDHPVSRLLWRRLKPLILGKILFAPDTNFTRKLMAQVNQTFEELALLRDLHELWGVLGPQIFNFMNDSTNVAMLQRLLDVGGTGQRQQTPRAQKKLEAIKDFLDPSRGGYSWREAHADMGRLAGILGQMMECVSLDKLEAVPSEEALVSRALELLGERRLWAGIVFLSPEHPLDPSELSSPALSPGHLRFKIRMDIDDVTRTNKIRDKFWDPGPSADPFMDLRYVWGGFVYLQDLLEQAAVRVLGGGNSRTGLYLQQMPHPCYVDDVFLRVLSRSLPLFLTLAWIYSVALTVKAVVREKETRLRETMRAMGLSRAVLWLGWFLSCLGPFLVSAALLVLVLKLGNILPYSHPVVIFLFLAAFAVATVAQSFLLSAFFSRANLAAACGGLAYFALYLPYVLCVAWRERLHLGGLLAASLLSPVAFGFGCESLALLEEQGDGAQWHNLGTGPAEDVFSLAQVSAFLLLDAVIYGLALWYLEAVCPGQYGIPEPWNFPFRRSYWCGPGPPKSSVLAPAPQDPKVLVEEPPLGLVPGVSIRGLKKHFRGCPQPALQGLNLDFYEGHITAFLGHNGAGKTTTLSILSGLFPPSSGSASILGHDVQTNMAAIRPHLGICPQYNVLFDMLTVEEHVWFYGRLKGVSAAAMGPERERLIRDVGLTLKRDTQTRHLSGGMQRKLSVAIAFVGGSRVVIMDEPTAGVDPASRRGIWELLLKYREGRTLILSTHHLDEAELLGDRVAMVAGGSLCCCGSPLFLRRHLGCGYYLTLVKSSQSLVTHDAKGDSEDPRREKKSDGNGRTSDTAFTRGTSDKSNQAPAPGAVPITPSTARILELVQQHVPGAQLVEDLPHELLLVLPYAGALDGSFAMVFQELDQQLELLGLTGYGISDTNLEEIFLKVVEDAHREGGDSRPQLHLRTCTPQPPTGPEASVLENGELAPQGLAPNAAQVQGWTLTCQQLRALLHKRFLLARRSRRGLFAQVVLPALFVGLALFFSLIVPPFGQYPPLQLSPAMYGPQVSFFSEDAPGDPNRMKLLEALLGEAGLQEPSMQDKDARGSECTHSLACYFTVPEVPPDVASILASGNWTPESPSPACQCSQPGARRLLPDCPAGAGGPPPPQAVAGLGEVVQNLTGRNVSDFLVKTYPSLVRRGLKTKKWVDEVRYGGFSLGGRDPDLPTGHEVVRTLAEIRALLSPQPGNALDRILNNLTQWALGLDARNSLKIWFNNKGWHAMVAFVNRANNGLLHALLPSGPVRHAHSITTLNHPLNLTKEQLSEATLIASSVDVLVSICVVFAMSFVPASFTLVLIEERITRAKHLQLVSGLPQTLYWLGNFLWDMCNYLVAVCIVVFIFLAFQQRAYVAPENLPALLLLLLLYGWSITPLMYPASFFFSVPSTAYVVLTCINLFIGINSSMATFVLELLSDQNLQEVSRILKQVFLIFPHFCLGRGLIDMVRNQAMADAFERLGDKQFQSPLRWDIIGKNLLAMMAQGPLFLLITLLLQHRNRLLPQSKPRLLPPLGEEDEDVAQERERVTKGATQGDVLVLRDLTKVYRGQRNPAVDRLCLGIPPGECFGLLGVNGAGKTSTFRMVTGDTLPSSGEAVLAGHNVAQERSAAHRSMGYCPQSDAIFDLLTGREHLELFARLRGVPEAQVAQTALSGLVRLGLPSYADRPAGTYSGGNKRKLATALALVGDPAVVFLDEPTTGMDPSARRFLWNSLLSVVREGRSVVLTSHSMEECEALCTRLAIMVNGRFRCLGSSQHLKGRFGAGHTLTLRVPPDQPEPAIAFIRITFPGAELREVHGSRLRFQLPPGGRCTLTRVFRELAAQGRAHGVEDFSVSQTTLEEVFLYFSKDQGEEEESSRQEAEEEEVSKPGRQHPKRVSRFLEDPSSVETMI.

A helical membrane pass occupies residues 22-42; sequence PIQLLVELLWPLFLFFILVAV. Over 43–546 the chain is Extracellular; it reads RHSHPPLEHH…DVFLRVLSRS (504 aa). A disulfide bond links cysteine 75 and cysteine 222. N-linked (GlcNAc...) asparagine glycosylation occurs at asparagine 309. A run of 6 helical transmembrane segments spans residues 547-567, 590-610, 623-643, 652-672, 678-698, and 732-752; these read LPLF…KAVV, LGWF…LVLV, VVIF…SFLL, LAAA…VLCV, LHLG…GFGC, and AFLL…EAVC. One can recognise an ABC transporter 1 domain in the interval 804–1035; that stretch reads VSIRGLKKHF…LGCGYYLTLV (232 aa). Position 838–845 (838–845) interacts with ATP; it reads GHNGAGKT. The chain crosses the membrane as a helical span at residues 846 to 866; sequence TTLSILSGLFPPSSGSASILG. Disordered regions lie at residues 1042-1088 and 1172-1192; these read VTHD…GAVP and GGDS…PTGP. A compositionally biased stretch (basic and acidic residues) spans 1044 to 1061; that stretch reads HDAKGDSEDPRREKKSDG. The span at 1062-1081 shows a compositional bias: polar residues; that stretch reads NGRTSDTAFTRGTSDKSNQA. A helical transmembrane segment spans residues 1246-1266; the sequence is VVLPALFVGLALFFSLIVPPF. The Extracellular segment spans residues 1267–1551; the sequence is GQYPPLQLSP…TLIASSVDVL (285 aa). Cysteine 1359 and cysteine 1373 are joined by a disulfide. A run of 5 helical transmembrane segments spans residues 1552-1572, 1598-1618, 1635-1655, 1663-1683, and 1743-1763; these read VSIC…LVLI, FLWD…IFLA, LLLL…SFFF, VVLT…TFVL, and IIGK…LITL. In terms of domain architecture, ABC transporter 2 spans 1807–2039; that stretch reads LVLRDLTKVY…FGAGHTLTLR (233 aa). 1841–1848 provides a ligand contact to ATP; it reads GVNGAGKT. A disordered region spans residues 2118–2159; that stretch reads QGEEEESSRQEAEEEEVSKPGRQHPKRVSRFLEDPSSVETMI. A compositionally biased stretch (acidic residues) spans 2119-2133; sequence GEEEESSRQEAEEEE.

It belongs to the ABC transporter superfamily. ABCA family. Post-translationally, N-glycosylated. Widely expressed with higher expression in brain, lung, adrenal gland, spleen and hematopoietic tissues (at protein level). In the brain, expressed in cortex, cerebellum, hippocampus, olfactory bulb, neurons, astrocytes and microglia (at protein level). Also expressed in adipocytes and macrophages (at protein level). Expressed in thymocytes (at protein level). Highly expressed in spleen and hematopoietic tissues. Expressed in brain, lung, macrophages, microglia, oligodendrocytes and neurons.

The protein resides in the cell membrane. It is found in the golgi apparatus membrane. It localises to the early endosome membrane. Its subcellular location is the cytoplasm. The protein localises to the cell projection. The protein resides in the ruffle membrane. It is found in the phagocytic cup. Functionally, probable ATP-binding cassette (ABC) transporter that plays a role in lipid homeostasis and macrophage-mediated phagocytosis. Binds APOA1 and may function in apolipoprotein-mediated phospholipid efflux from cells. May also mediate cholesterol efflux. May regulate cellular ceramide homeostasis during keratinocyte differentiation. Involved in lipid raft organization and CD1D localization on thymocytes and antigen-presenting cells, which plays an important role in natural killer T-cell development and activation. Plays a role in phagocytosis of apoptotic cells by macrophages. Macrophage phagocytosis is stimulated by APOA1 or APOA2, probably by stabilization of ABCA7. Also involved in phagocytic clearance of amyloid-beta by microglia cells and macrophages. Further limits amyloid-beta production by playing a role in the regulation of amyloid-beta A4 precursor protein (APP) endocytosis and/or processing. The sequence is that of ATP-binding cassette sub-family A member 7 (Abca7) from Mus musculus (Mouse).